The sequence spans 325 residues: tRNA dimethylallyltransferase (325 aa).

ATP is bound at residue G17–T24. T19–T24 is a binding site for substrate. 4 interaction with substrate tRNA regions span residues D42–L45, Q166–R170, R251–R256, and K284–R291.

Belongs to the IPP transferase family. As to quaternary structure, monomer. Mg(2+) is required as a cofactor.

The catalysed reaction is adenosine(37) in tRNA + dimethylallyl diphosphate = N(6)-dimethylallyladenosine(37) in tRNA + diphosphate. Functionally, catalyzes the transfer of a dimethylallyl group onto the adenine at position 37 in tRNAs that read codons beginning with uridine, leading to the formation of N6-(dimethylallyl)adenosine (i(6)A). The polypeptide is tRNA dimethylallyltransferase (Burkholderia multivorans (strain ATCC 17616 / 249)).